The following is a 263-amino-acid chain: Putative S-adenosyl-L-methionine-dependent methyltransferase Mjls_0079 (263 aa).

Residues D121 and 150–151 (ES) each bind S-adenosyl-L-methionine.

Belongs to the UPF0677 family.

Its function is as follows. Exhibits S-adenosyl-L-methionine-dependent methyltransferase activity. The sequence is that of Putative S-adenosyl-L-methionine-dependent methyltransferase Mjls_0079 from Mycobacterium sp. (strain JLS).